Consider the following 156-residue polypeptide: Small ribosomal subunit protein uS7 (156 aa).

This sequence belongs to the universal ribosomal protein uS7 family. Part of the 30S ribosomal subunit. Contacts proteins S9 and S11.

Its function is as follows. One of the primary rRNA binding proteins, it binds directly to 16S rRNA where it nucleates assembly of the head domain of the 30S subunit. Is located at the subunit interface close to the decoding center, probably blocks exit of the E-site tRNA. The chain is Small ribosomal subunit protein uS7 from Deinococcus geothermalis (strain DSM 11300 / CIP 105573 / AG-3a).